The following is a 473-amino-acid chain: Fumarate hydratase class II (473 aa).

Substrate is bound by residues 105 to 107 (SGT), 130 to 133 (HPND), 140 to 142 (SSN), and threonine 188. Residue histidine 189 is the Proton donor/acceptor of the active site. The active site involves serine 319. Substrate contacts are provided by residues serine 320 and 325–327 (KVN).

Belongs to the class-II fumarase/aspartase family. Fumarase subfamily. As to quaternary structure, homotetramer.

Its subcellular location is the cytoplasm. It carries out the reaction (S)-malate = fumarate + H2O. Its pathway is carbohydrate metabolism; tricarboxylic acid cycle; (S)-malate from fumarate: step 1/1. Its function is as follows. Involved in the TCA cycle. Catalyzes the stereospecific interconversion of fumarate to L-malate. The protein is Fumarate hydratase class II of Xylella fastidiosa (strain 9a5c).